The sequence spans 97 residues: Co-chaperonin GroES (97 aa).

The protein belongs to the GroES chaperonin family. In terms of assembly, heptamer of 7 subunits arranged in a ring. Interacts with the chaperonin GroEL.

It is found in the cytoplasm. In terms of biological role, together with the chaperonin GroEL, plays an essential role in assisting protein folding. The GroEL-GroES system forms a nano-cage that allows encapsulation of the non-native substrate proteins and provides a physical environment optimized to promote and accelerate protein folding. GroES binds to the apical surface of the GroEL ring, thereby capping the opening of the GroEL channel. The polypeptide is Co-chaperonin GroES (Tolumonas auensis (strain DSM 9187 / NBRC 110442 / TA 4)).